A 224-amino-acid polypeptide reads, in one-letter code: 7-cyano-7-deazaguanine synthase (224 aa).

Residue 12–22 coordinates ATP; sequence LSGGLDSSTVT. 4 residues coordinate Zn(2+): Cys-193, Cys-201, Cys-204, and Cys-207.

Belongs to the QueC family. It depends on Zn(2+) as a cofactor.

The enzyme catalyses 7-carboxy-7-deazaguanine + NH4(+) + ATP = 7-cyano-7-deazaguanine + ADP + phosphate + H2O + H(+). It participates in purine metabolism; 7-cyano-7-deazaguanine biosynthesis. Catalyzes the ATP-dependent conversion of 7-carboxy-7-deazaguanine (CDG) to 7-cyano-7-deazaguanine (preQ(0)). The chain is 7-cyano-7-deazaguanine synthase from Prochlorococcus marinus (strain MIT 9215).